A 388-amino-acid chain; its full sequence is Valine--pyruvate aminotransferase (388 aa).

N6-(pyridoxal phosphate)lysine is present on lysine 234.

It belongs to the class-I pyridoxal-phosphate-dependent aminotransferase family. Requires pyridoxal 5'-phosphate as cofactor.

It carries out the reaction L-valine + pyruvate = 3-methyl-2-oxobutanoate + L-alanine. The chain is Valine--pyruvate aminotransferase from Mycobacterium tuberculosis (strain ATCC 25618 / H37Rv).